A 212-amino-acid polypeptide reads, in one-letter code: External core antigen (212 aa).

The first 19 residues, 1–19 (MQLFHLCLIISCSCPTVQA), serve as a signal peptide directing secretion. The HBEAG stretch occupies residues 25–27 (GWL). The interval 165–212 (NAPILSTLPETTVVRRRGRSPRRRTPSPRRRRSQSPRRRRSQSRESQC) is disordered. The segment covering 178-205 (VRRRGRSPRRRTPSPRRRRSQSPRRRRS) has biased composition (basic residues). A 1; half-length repeat occupies 184-190 (SPRRRTP). The tract at residues 184–206 (SPRRRTPSPRRRRSQSPRRRRSQ) is 3 X 8 AA repeats of S-P-R-R-R-R-S-Q. Positions 184-212 (SPRRRTPSPRRRRSQSPRRRRSQSRESQC) are excised as a propeptide. 2 repeat units span residues 191–198 (SPRRRRSQ) and 199–206 (SPRRRRSQ).

This sequence belongs to the orthohepadnavirus precore antigen family. Homodimerizes. Phosphorylated. Post-translationally, cleaved by host furin.

The protein localises to the secreted. It is found in the host nucleus. May regulate immune response to the intracellular capsid in acting as a T-cell tolerogen, by having an immunoregulatory effect which prevents destruction of infected cells by cytotoxic T-cells. This immune regulation may predispose to chronicity during perinatal infections and prevent severe liver injury during adult infections. This Homo sapiens (Human) protein is External core antigen.